The sequence spans 380 residues: MSKRDYYEVLGVSKDASERDIKKAYKRLAMKYHPDRTSGDKELETKFKEVKEAYEILTDAQKRQTYDQYGHAAFEQGGGGGGHGGFGGGHGDFGDVFGDVFGDIFGGGGGRRQSRQQRGSDLRYNMDLSLEEAVRGKEVEIKIPTWVGCDPCDGSGAKAGSKPKTCTTCHGAGQVQMRQGFFAVQQTCPTCQGQGQIISNPCDSCHGQGRVEKTKTLSVKIPAGVDTGDRIRLTGEGEAGMHGAPSGDLYVQVSVREHRIFVRDANNLHCEVPISFTTAGLGGEIEVPTLDGRAKLKIPSETQTGKMFRMRGKGVKSVRSGAIGDLICKVVIETPINLNERQRELLEELEESMGKDSSKNRPKEQGFFDGVKKFFDDLTK.

Positions 5 to 70 (DYYEVLGVSK…QKRQTYDQYG (66 aa)) constitute a J domain. The segment at 136-214 (GKEVEIKIPT…CHGQGRVEKT (79 aa)) adopts a CR-type zinc-finger fold. 8 residues coordinate Zn(2+): C149, C152, C166, C169, C188, C191, C202, and C205. CXXCXGXG motif repeat units lie at residues 149–156 (CDPCDGSG), 166–173 (CTTCHGAG), 188–195 (CPTCQGQG), and 202–209 (CDSCHGQG).

This sequence belongs to the DnaJ family. As to quaternary structure, homodimer. The cofactor is Zn(2+).

The protein localises to the cytoplasm. Its function is as follows. Participates actively in the response to hyperosmotic and heat shock by preventing the aggregation of stress-denatured proteins and by disaggregating proteins, also in an autonomous, DnaK-independent fashion. Unfolded proteins bind initially to DnaJ; upon interaction with the DnaJ-bound protein, DnaK hydrolyzes its bound ATP, resulting in the formation of a stable complex. GrpE releases ADP from DnaK; ATP binding to DnaK triggers the release of the substrate protein, thus completing the reaction cycle. Several rounds of ATP-dependent interactions between DnaJ, DnaK and GrpE are required for fully efficient folding. Also involved, together with DnaK and GrpE, in the DNA replication of plasmids through activation of initiation proteins. The protein is Chaperone protein DnaJ of Pseudoalteromonas translucida (strain TAC 125).